The chain runs to 688 residues: Thyroid hormone-induced protein B (688 aa).

The N-terminal stretch at 1-20 (MMLSHWVLLLSLGAVWLAEG) is a signal peptide. MAM domains follow at residues 26–169 (GSCT…GYCI), 170–330 (ECDF…SCSG), 341–500 (AGCD…SCKI), and 509–669 (GKCT…PCND). Asn32 and Asn135 each carry an N-linked (GlcNAc...) asparagine glycan. Residues Asn358 and Asn668 are each glycosylated (N-linked (GlcNAc...) asparagine).

The protein localises to the membrane. The protein resides in the secreted. Its subcellular location is the extracellular space. The protein is Thyroid hormone-induced protein B of Xenopus laevis (African clawed frog).